Here is a 161-residue protein sequence, read N- to C-terminus: Allophycocyanin beta subunit (161 aa).

Asparagine 71 bears the N4-methylasparagine mark. Cysteine 81 contributes to the (2R,3E)-phycocyanobilin binding site.

Belongs to the phycobiliprotein family. Heterodimer of an alpha and a beta chain. Contains one covalently linked phycocyanobilin chromophore. The chromophore is added by the phycocyanobilin lyase CpcUS.

It is found in the cellular thylakoid membrane. Light-harvesting photosynthetic bile pigment-protein from the phycobiliprotein complex. Allophycocyanin has a maximum absorption at approximately 650 nanometers. The chain is Allophycocyanin beta subunit (apcB) from Picosynechococcus sp. (strain ATCC 27264 / PCC 7002 / PR-6) (Agmenellum quadruplicatum).